Consider the following 143-residue polypeptide: uncharacterized protein (143 aa).

The N-terminal 38 residues, 1–38, are a transit peptide targeting the mitochondrion; sequence MKYWKYLSQLTIRRPLTYNNALLYRNRFPSILTWKRSA.

The protein resides in the mitochondrion. This is an uncharacterized protein from Schizosaccharomyces pombe (strain 972 / ATCC 24843) (Fission yeast).